The primary structure comprises 152 residues: Immunity protein YobK (152 aa).

Interacts with cognate toxin YobL but not with non-cognate putative toxin YeeF. The interaction inhibits the toxic activity of YobL.

Its subcellular location is the cytoplasm. Its function is as follows. Immunity component of one of 6 LXG toxin-immunity modules in this strain. They promote kin selection, mediate competition in biofilms, and drive spatial segregation of different strains, indicating that LXG toxins may help avoid warfare between strains in biofilms. Mediates intercellular competition during biofilm formation; disruption of the operon disadvantages the bacteria, but overexpression of the cognate immunity protein restores growth in competition with wild-type. In situ neutralizes the toxic effect of cognate toxin YobL. Neutralizes the toxic activity of cognate toxin YobL upon expression in E.coli. Does not have immunity protein activity on other LXG toxins. The chain is Immunity protein YobK (yobK) from Bacillus subtilis (strain 168).